Here is a 171-residue protein sequence, read N- to C-terminus: Peptidyl-prolyl cis-trans isomerase slr1251 (171 aa).

A PPIase cyclophilin-type domain is found at 6–169 (FFDITIGSDT…QAIVISDCGE (164 aa)).

It belongs to the cyclophilin-type PPIase family.

It catalyses the reaction [protein]-peptidylproline (omega=180) = [protein]-peptidylproline (omega=0). PPIases accelerate the folding of proteins. It catalyzes the cis-trans isomerization of proline imidic peptide bonds in oligopeptides. The sequence is that of Peptidyl-prolyl cis-trans isomerase slr1251 from Synechocystis sp. (strain ATCC 27184 / PCC 6803 / Kazusa).